The following is a 108-amino-acid chain: Small ribosomal subunit protein uS17 (108 aa).

Belongs to the universal ribosomal protein uS17 family. Part of the 30S ribosomal subunit.

In terms of biological role, one of the primary rRNA binding proteins, it binds specifically to the 5'-end of 16S ribosomal RNA. The sequence is that of Small ribosomal subunit protein uS17 from Methanospirillum hungatei JF-1 (strain ATCC 27890 / DSM 864 / NBRC 100397 / JF-1).